The following is a 466-amino-acid chain: Mitochondrial-processing peptidase subunit beta (466 aa).

His73 serves as a coordination point for Zn(2+). Glu76 (proton acceptor) is an active-site residue. Residues His77 and Glu153 each contribute to the Zn(2+) site.

The protein belongs to the peptidase M16 family. In terms of assembly, heterodimer of mppA (alpha) and mppB (beta) subunits, forming the mitochondrial processing protease (MPP) in which mppA is involved in substrate recognition and binding and mppB is the catalytic subunit. Zn(2+) is required as a cofactor.

Its subcellular location is the mitochondrion matrix. It carries out the reaction Release of N-terminal transit peptides from precursor proteins imported into the mitochondrion, typically with Arg in position P2.. With respect to regulation, binding to mppA is required for catalytic activity. Its function is as follows. Catalytic subunit of the essential mitochondrial processing protease (MPP), which cleaves the mitochondrial sequence off newly imported precursors proteins. Preferentially, cleaves after an arginine at position P2. The protein is Mitochondrial-processing peptidase subunit beta (mppB) of Lentinula edodes (Shiitake mushroom).